Reading from the N-terminus, the 447-residue chain is N-succinylarginine dihydrolase (447 aa).

Residues 19-28, asparagine 110, and 137-138 each bind substrate; these read AGLSFGNEAS and HR. Glutamate 174 is an active-site residue. Residue arginine 212 participates in substrate binding. The active site involves histidine 248. The substrate site is built by aspartate 250 and asparagine 359. Cysteine 365 functions as the Nucleophile in the catalytic mechanism.

This sequence belongs to the succinylarginine dihydrolase family. As to quaternary structure, homodimer.

It carries out the reaction N(2)-succinyl-L-arginine + 2 H2O + 2 H(+) = N(2)-succinyl-L-ornithine + 2 NH4(+) + CO2. The protein operates within amino-acid degradation; L-arginine degradation via AST pathway; L-glutamate and succinate from L-arginine: step 2/5. Catalyzes the hydrolysis of N(2)-succinylarginine into N(2)-succinylornithine, ammonia and CO(2). In Salmonella typhi, this protein is N-succinylarginine dihydrolase.